Here is a 304-residue protein sequence, read N- to C-terminus: Glyceraldehyde-3-phosphate dehydrogenase 2 (304 aa).

Residues 1-2 (RI), D22, and R67 contribute to the NAD(+) site. Residues 138 to 140 (SCT), T169, 198 to 199 (TG), and R221 each bind D-glyceraldehyde 3-phosphate. C139 acts as the Nucleophile in catalysis. Position 303 (N303) interacts with NAD(+).

It belongs to the glyceraldehyde-3-phosphate dehydrogenase family. Homotetramer.

It is found in the cytoplasm. It carries out the reaction D-glyceraldehyde 3-phosphate + phosphate + NAD(+) = (2R)-3-phospho-glyceroyl phosphate + NADH + H(+). The protein operates within carbohydrate degradation; glycolysis; pyruvate from D-glyceraldehyde 3-phosphate: step 1/5. This Drosophila subobscura (Fruit fly) protein is Glyceraldehyde-3-phosphate dehydrogenase 2 (Gapdh2).